The primary structure comprises 98 residues: Small ribosomal subunit protein uS17 (98 aa).

This sequence belongs to the universal ribosomal protein uS17 family. Part of the 30S ribosomal subunit.

One of the primary rRNA binding proteins, it binds specifically to the 5'-end of 16S ribosomal RNA. This Mesomycoplasma hyopneumoniae (strain 232) (Mycoplasma hyopneumoniae) protein is Small ribosomal subunit protein uS17.